We begin with the raw amino-acid sequence, 145 residues long: Large ribosomal subunit protein uL13 (145 aa).

The protein belongs to the universal ribosomal protein uL13 family. Part of the 50S ribosomal subunit.

Functionally, this protein is one of the early assembly proteins of the 50S ribosomal subunit, although it is not seen to bind rRNA by itself. It is important during the early stages of 50S assembly. In Staphylococcus carnosus (strain TM300), this protein is Large ribosomal subunit protein uL13.